We begin with the raw amino-acid sequence, 118 residues long: Ribonuclease P protein component (118 aa).

This sequence belongs to the RnpA family. As to quaternary structure, consists of a catalytic RNA component (M1 or rnpB) and a protein subunit.

The enzyme catalyses Endonucleolytic cleavage of RNA, removing 5'-extranucleotides from tRNA precursor.. RNaseP catalyzes the removal of the 5'-leader sequence from pre-tRNA to produce the mature 5'-terminus. It can also cleave other RNA substrates such as 4.5S RNA. The protein component plays an auxiliary but essential role in vivo by binding to the 5'-leader sequence and broadening the substrate specificity of the ribozyme. The sequence is that of Ribonuclease P protein component from Bifidobacterium animalis subsp. lactis (strain AD011).